Here is a 523-residue protein sequence, read N- to C-terminus: UDP-glucuronosyltransferase 3A1 (523 aa).

Residues 1-22 (MVGQRVLLLVAFLLSGVLLSEA) form the signal peptide. Residues 23–483 (AKILTISTLG…YAFQQPWHEQ (461 aa)) lie on the Extracellular side of the membrane. Residue Asn52 is glycosylated (N-linked (GlcNAc...) asparagine). The chain crosses the membrane as a helical span at residues 484 to 504 (YLIDVFVFLLGLTLGTMWLCG). The Cytoplasmic portion of the chain corresponds to 505 to 523 (KLLGVVARWLRGARKVKKT).

This sequence belongs to the UDP-glycosyltransferase family.

Its subcellular location is the membrane. The catalysed reaction is glucuronate acceptor + UDP-alpha-D-glucuronate = acceptor beta-D-glucuronoside + UDP + H(+). In terms of biological role, UDP-glucuronosyltransferases catalyze phase II biotransformation reactions in which lipophilic substrates are conjugated with glucuronic acid to increase water solubility and enhance excretion. They are of major importance in the conjugation and subsequent elimination of potentially toxic xenobiotics and endogenous compounds. This Homo sapiens (Human) protein is UDP-glucuronosyltransferase 3A1 (UGT3A1).